A 390-amino-acid chain; its full sequence is Homeobox protein Meis1 (390 aa).

The MEIS N-terminal domain maps to 108–191; that stretch reads GGDVCSSESF…PIDLVIDDRD (84 aa). Residues 188-202 are compositionally biased toward basic and acidic residues; sequence DDRDGGSKSDSEDLT. A disordered region spans residues 188–279; it reads DDRDGGSKSD…KKRNKGRGIF (92 aa). The homeobox; TALE-type DNA-binding region spans 272–334; sequence RNKGRGIFPK…NARRRIVQPM (63 aa). Residues 299-329 are interaction with DNA; that stretch reads YPSEEQKKQLAQDTGLTILQVNNWFINARRR.

The protein belongs to the TALE/MEIS homeobox family. In terms of assembly, interacts with pbx1 isoform b. In the embryo, displays a broad expression pattern with high levels observed in tissues of neural cell fate such as midbrain, hindbrain, dorsal portion of the neural tube, and neural crest-derived branchial arches. Widely expressed in the adult with highest levels in brain and spleen.

The protein localises to the cytoplasm. It localises to the nucleus. Functionally, induces expression of a number of neural crest marker genes as part of a heterodimer with isoform b of pbx1, to specify neural crest cell fate. Binds to a highly conserved region in the promoter of the neural crest marker gene zic3. The chain is Homeobox protein Meis1 (meis1) from Xenopus laevis (African clawed frog).